Reading from the N-terminus, the 422-residue chain is MDTPASLNDLQHTTLAIVLAGGRGTRLGPLTNKRVKPAVHFGGKYRIIDFALSNCLNSGIRRIAVVTQYKAHSLLRHVQRGWGFLRGEFNEFIDLWPAQQRVEGAHWYRGTADAVFQNLDIIRSIRPKYVVVLAGDHIYKMDYTRMVMDHVESKADCTVGCIEVPRMEAVAFGVMHVDEERRVTGFVEKPADPPAMPGHPDIALASMGIYVFNADYLYSLLEDNITSVATDHDFGKDIIPRVVTSGNAIAHPFSMSCVSSDPSVEPYWRDVGTIDAYWAANLDLASTIPSLDLYDRNWPIWTHQEQLPPAKFVRDLNGLQGTGTNMIVCGGCVISGSQISRSVLSSNVVVNSFCNIAEAVLLPQVSIGASCRLRKVVIDRGCHIPDGTVIGEDPVRDGERFYRTDSGVVLVTAEALKRQTAR.

Alpha-D-glucose 1-phosphate is bound by residues tyrosine 108, glycine 173, 188-189 (EK), and serine 206.

Belongs to the bacterial/plant glucose-1-phosphate adenylyltransferase family. As to quaternary structure, homotetramer.

It carries out the reaction alpha-D-glucose 1-phosphate + ATP + H(+) = ADP-alpha-D-glucose + diphosphate. Its pathway is glycan biosynthesis; glycogen biosynthesis. Functionally, involved in the biosynthesis of ADP-glucose, a building block required for the elongation reactions to produce glycogen. Catalyzes the reaction between ATP and alpha-D-glucose 1-phosphate (G1P) to produce pyrophosphate and ADP-Glc. The polypeptide is Glucose-1-phosphate adenylyltransferase (Paraburkholderia phymatum (strain DSM 17167 / CIP 108236 / LMG 21445 / STM815) (Burkholderia phymatum)).